The sequence spans 112 residues: Ciliary microtubule inner protein 3 (112 aa).

The tract at residues 1 to 34 (MCKDSQKPSVPSHGPKTPSCKGVKAPHSSRPRAW) is disordered.

The protein belongs to the CIMIP3-like family.

The protein localises to the cytoplasm. Its subcellular location is the cytoskeleton. It localises to the flagellum axoneme. This is Ciliary microtubule inner protein 3 from Homo sapiens (Human).